The primary structure comprises 453 residues: Nitrilotriacetate monooxygenase component A (453 aa).

FMN-binding residues include D58, T107, H157, Y161, S231, and S232.

Belongs to the NtaA/SnaA/DszA monooxygenase family. In terms of assembly, heterodimer of two subunits, A and B.

The catalysed reaction is nitrilotriacetate + FMNH2 + O2 = aminodiacetate + FMN + glyoxylate + H2O. Its function is as follows. Hydroxylation of nitrilotriacetate. In Aminobacter aminovorans (Chelatobacter heintzii), this protein is Nitrilotriacetate monooxygenase component A (ntaA).